The following is a 53-amino-acid chain: Sec-independent protein translocase protein TatA (53 aa).

The helical transmembrane segment at 1 to 21 (MGMSFSHLLIVLLIIFVLFGA) threads the bilayer.

The protein belongs to the TatA/E family. In terms of assembly, the Tat system comprises two distinct complexes: a TatABC complex, containing multiple copies of TatA, TatB and TatC subunits, and a separate TatA complex, containing only TatA subunits. Substrates initially bind to the TatABC complex, which probably triggers association of the separate TatA complex to form the active translocon.

The protein resides in the cell inner membrane. Its function is as follows. Part of the twin-arginine translocation (Tat) system that transports large folded proteins containing a characteristic twin-arginine motif in their signal peptide across membranes. TatA could form the protein-conducting channel of the Tat system. This is Sec-independent protein translocase protein TatA from Rickettsia typhi (strain ATCC VR-144 / Wilmington).